The chain runs to 122 residues: Large ribosomal subunit protein uL14 (122 aa).

This sequence belongs to the universal ribosomal protein uL14 family. As to quaternary structure, part of the 50S ribosomal subunit. Forms a cluster with proteins L3 and L19. In the 70S ribosome, L14 and L19 interact and together make contacts with the 16S rRNA in bridges B5 and B8. Interacts with ribosomal silencing factor RsfS, which may inhibit ribosomal subunit association.

In terms of biological role, binds to 23S rRNA. Forms part of two intersubunit bridges in the 70S ribosome. The chain is Large ribosomal subunit protein uL14 from Treponema pallidum (strain Nichols).